We begin with the raw amino-acid sequence, 161 residues long: Troponin C, slow skeletal and cardiac muscles (161 aa).

At methionine 1 the chain carries N-acetylmethionine. 4 consecutive EF-hand domains span residues 16-51, 52-87, 92-127, and 128-161; these read QKNE…LGQN, PTPE…CMKD, KSEE…TGET, and ITED…KGVE. The Ca(2+) site is built by aspartate 65, aspartate 67, serine 69, threonine 71, and glutamate 76. Phosphoserine is present on serine 98. Residues aspartate 105, asparagine 107, aspartate 109, tyrosine 111, glutamate 116, aspartate 141, asparagine 143, aspartate 145, arginine 147, and glutamate 152 each contribute to the Ca(2+) site.

It belongs to the troponin C family.

In terms of biological role, troponin is the central regulatory protein of striated muscle contraction. Tn consists of three components: Tn-I which is the inhibitor of actomyosin ATPase, Tn-T which contains the binding site for tropomyosin and Tn-C. The binding of calcium to Tn-C abolishes the inhibitory action of Tn on actin filaments. The chain is Troponin C, slow skeletal and cardiac muscles (TNNC1) from Homo sapiens (Human).